We begin with the raw amino-acid sequence, 168 residues long: Endoribonuclease YbeY (168 aa).

Positions 125, 129, and 135 each coordinate Zn(2+).

This sequence belongs to the endoribonuclease YbeY family. The cofactor is Zn(2+).

The protein resides in the cytoplasm. Functionally, single strand-specific metallo-endoribonuclease involved in late-stage 70S ribosome quality control and in maturation of the 3' terminus of the 16S rRNA. The polypeptide is Endoribonuclease YbeY (Rhodopseudomonas palustris (strain BisB18)).